Reading from the N-terminus, the 174-residue chain is Calcium-binding protein F (174 aa).

EF-hand domains follow at residues 9–44 (KIFQEVQKFVKNYDLNKDGSVTSFDIYRSFLKKMDG), 60–83 (VDMDHDGKFTYQEIAKYCADEAKK), 92–127 (AALADVEAMLLRFDKDKDKKLTKTEFVEYFKGNGHT), and 133–162 (DQVLKIIDLDKDGCVSANELQEWFKKRRID). The Ca(2+) site is built by aspartate 22, asparagine 24, aspartate 26, serine 28, and aspartate 33. 10 residues coordinate Ca(2+): aspartate 105, aspartate 107, aspartate 109, lysine 111, glutamate 116, aspartate 140, aspartate 142, aspartate 144, cysteine 146, and glutamate 151.

This is Calcium-binding protein F (cbpF) from Dictyostelium discoideum (Social amoeba).